The primary structure comprises 587 residues: MARIKKRGTTGNAKNFITRTQAIKKLQISLADFRRLCIFKGIYPREPRNKKKANKGSTAPVTFYYSKDIQYLLHEPVLDKFRQHKTFAKKLQKALGRGEVSDAYKLDQHRPKYTLNHIIKERYPTFADALRDLDDPLNMLFLFANMPATDKVSAKVVSEAEKLCNQWLAYVAKERCLKKVFVSIKGVYYQATVKGQEIRWLIPYKFPTNIPTDVDFRIMLTFLEFYSTLVHFVLYKLYNEAGLIYPPIIEKSIGLSGYVLQDKDAPLKKKEEKNDEEGKNLSKKELNKAIKADQEQQENDEQDNNNGESVEDIELDEFTSTKEDSLLQPSKYASSTAELFSKFIFYIGREVPLDILEFCILSCGGKIISEIAIDDLKINDPEAYKKLNLSNITHQIIDRPKILQKVPGRTYVQPQWVFDSINKQELINVNEYAAGETLPPHLSPWGDAGGYDPNKEVEKEDGEAEEDTDEEEEEVEIEDGDEDQEDEEEEEDEDLKAQKELELEAAGVKFSEINEEDKKSHSKKSKGTSNKEADEEKELKKIMMSNKQKKLFKKMQYGIEKKENREKQLTKKKKQLNKKKEQLKKLN.

Positions 267 to 306 form a coiled coil; that stretch reads LKKKEEKNDEEGKNLSKKELNKAIKADQEQQENDEQDNNN. The disordered stretch occupies residues 290–311; that stretch reads IKADQEQQENDEQDNNNGESVE. The span at 295–311 shows a compositional bias: acidic residues; it reads EQQENDEQDNNNGESVE. The BRCT domain maps to 335-434; that stretch reads STAELFSKFI…ELINVNEYAA (100 aa). The segment at 437–587 is disordered; sequence TLPPHLSPWG…KKKEQLKKLN (151 aa). Over residues 459 to 494 the composition is skewed to acidic residues; the sequence is KEDGEAEEDTDEEEEEVEIEDGDEDQEDEEEEEDED. Residues 470-587 adopt a coiled-coil conformation; that stretch reads EEEEEVEIED…KKKEQLKKLN (118 aa). Basic and acidic residues-rich tracts occupy residues 529-541, 559-569, and 578-587; these read SNKEADEEKELKK, IEKKENREKQL, and KKKEQLKKLN.

Belongs to the pescadillo family. In terms of assembly, component of the NOP7 complex, composed of ERB1, NOP7 and YTM1. The complex is held together by ERB1, which interacts with NOP7 via its N-terminal domain and with YTM1 via a high-affinity interaction between the seven-bladed beta-propeller domains of the 2 proteins. The NOP7 complex associates with the 66S pre-ribosome.

Its subcellular location is the nucleus. It is found in the nucleolus. The protein resides in the nucleoplasm. Component of the NOP7 complex, which is required for maturation of the 25S and 5.8S ribosomal RNAs and formation of the 60S ribosome. Required for the transition from hyphal to yeast growth. In Candida albicans (strain SC5314 / ATCC MYA-2876) (Yeast), this protein is Pescadillo homolog.